We begin with the raw amino-acid sequence, 90 residues long: Actobindin-B/C (90 aa).

2 consecutive WH2 domains span residues 4-21 (TANP…LKHA) and 40-57 (DHSS…LKHV). Residues 57–90 (VETQDRSAPVTEGATVKSNNHSALLGEIKSKAQE) are disordered.

In terms of assembly, monomer.

In terms of biological role, is able to bind two actin monomers at high concentrations of G-actin. Inhibits actin polymerization by sequestering G-actin and stabilizing actin dimers. The polypeptide is Actobindin-B/C (abnB) (Dictyostelium discoideum (Social amoeba)).